Consider the following 745-residue polypeptide: Poly(A) polymerase alpha (745 aa).

Positions 1 to 17 (MPFPVTTQGSQQTQPPQ) are enriched in low complexity. The segment at 1-22 (MPFPVTTQGSQQTQPPQKHYGI) is disordered. Phosphoserine occurs at positions 10 and 24. ATP contacts are provided by residues 100-102 (FGS), T109, 113-115 (DID), D167, K228, Y237, and 246-247 (GV). Residues D113, D115, and D167 each coordinate Mg(2+). Residues K444, K445, K506, and K507 each participate in a glycyl lysine isopeptide (Lys-Gly) (interchain with G-Cter in SUMO) cross-link. Positions 490-507 (RKQLHQLLPNHVLQKKKK) match the Nuclear localization signal 1 motif. Residues 508–643 (HSTEGVKLTA…TSGNAATKIP (136 aa)) form a ser/Thr-rich region. Residues 523 to 534 (LDLSMDSDNSMS) are compositionally biased toward low complexity. 2 disordered regions span residues 523 to 565 (LDLS…AVTA) and 577 to 704 (SVPQ…SETI). The span at 535-557 (VPSPTSATKTSPLNSSGSSQGRN) shows a compositional bias: polar residues. S537 and S558 each carry phosphoserine. Composition is skewed to low complexity over residues 583 to 594 (SSESSGGTSSES) and 611 to 640 (TVSR…NAAT). N6-acetyllysine is present on residues K641 and K650. Residues 650–665 (KRTSSPHKEESPKKTK) carry the Nuclear localization signal 2 motif. Composition is skewed to basic and acidic residues over residues 655–666 (PHKEESPKKTKT) and 682–692 (GHDKTEAKEQL). The segment at 677–745 (CLALSGHDKT…KNSIKLRLNR (69 aa)) is required for interaction with NUDT21. The segment covering 694 to 704 (TETSTTQSETI) has biased composition (low complexity). K736 is modified (N6-acetyllysine; alternate). A Glycyl lysine isopeptide (Lys-Gly) (interchain with G-Cter in SUMO); alternate cross-link involves residue K736. Phosphoserine is present on S738. K740 is modified (N6-acetyllysine; alternate). K740 is covalently cross-linked (Glycyl lysine isopeptide (Lys-Gly) (interchain with G-Cter in SUMO); alternate).

Belongs to the poly(A) polymerase family. As to quaternary structure, monomer. Found in a complex with CPSF1, FIP1L1 and PAPOLA. Interacts with AHCYL1 and FIP1L1; the interaction with AHCYL1 seems to increase interaction with FIP1L1. Interacts with NUDT21; the interaction is diminished by acetylation. Interacts with KPNB1; the interaction promotes PAP nuclear import and is inhibited by acetylation of PAP. Requires Mg(2+) as cofactor. Mn(2+) serves as cofactor. In terms of processing, polysumoylated. Varying sumoylation depending on tissue- and cell-type. Highly sumoylated in bladder and NIH 3T3 cells. Sumoylation is required for nuclear localization and enhances PAP stability. Desumoylated by SENP1. Inhibits polymerase activity. Hyperphosphorylation on multiple CDK2 consensus and non-consensus sites in the C-terminal Ser/Thr-rich region represses PAP activity in late M-phase. Phosphorylation/dephosphorylation may regulate the interaction between PAP and CPSF. Post-translationally, acetylated in the C-terminus. Acetylation decreases interaction with NUDT21 and KPNB1, and inhibits nuclear localization through inhibiting binding to the importin alpha/beta complex.

The protein localises to the cytoplasm. Its subcellular location is the nucleus. The catalysed reaction is RNA(n) + ATP = RNA(n)-3'-adenine ribonucleotide + diphosphate. Polymerase that creates the 3'-poly(A) tail of mRNA's. Also required for the endoribonucleolytic cleavage reaction at some polyadenylation sites. May acquire specificity through interaction with a cleavage and polyadenylation specificity factor (CPSF) at its C-terminus. The chain is Poly(A) polymerase alpha (PAPOLA) from Homo sapiens (Human).